The primary structure comprises 326 residues: Putative [LysW]-lysine/[LysW]-ornithine hydrolase (326 aa).

His-66 is a binding site for Zn(2+). Asp-68 is an active-site residue. Zn(2+) is bound at residue Asp-90. The active-site Proton acceptor is the Glu-117. Zn(2+)-binding residues include Glu-118, Glu-139, and His-297.

The protein belongs to the peptidase M20A family. LysK subfamily. Zn(2+) serves as cofactor. It depends on Co(2+) as a cofactor.

The protein resides in the cytoplasm. It carries out the reaction [amino-group carrier protein]-C-terminal-gamma-(L-lysyl)-L-glutamate + H2O = [amino-group carrier protein]-C-terminal-L-glutamate + L-lysine. The catalysed reaction is [amino-group carrier protein]-C-terminal-gamma-(L-ornithyl)-L-glutamate + H2O = [amino-group carrier protein]-C-terminal-L-glutamate + L-ornithine. It functions in the pathway amino-acid biosynthesis; L-lysine biosynthesis via AAA pathway; L-lysine from L-alpha-aminoadipate (Thermus route): step 5/5. It participates in amino-acid biosynthesis; L-arginine biosynthesis. In terms of biological role, catalyzes the release of L-lysine from [LysW]-gamma-L-lysine and the release of L-ornithine from [LysW]-L-ornithine. This is Putative [LysW]-lysine/[LysW]-ornithine hydrolase from Pyrococcus furiosus (strain ATCC 43587 / DSM 3638 / JCM 8422 / Vc1).